The following is a 634-amino-acid chain: Kelch-like protein 22 (634 aa).

N-acetylalanine is present on Ala-2. The BTB domain occupies 50 to 117; that stretch reads FDVVLVVEGR…IYTSELELSL (68 aa). Kelch repeat units lie at residues 299 to 349, 350 to 399, 400 to 446, 448 to 493, 494 to 544, and 545 to 593; these read CVVG…VLNN, FVYL…VVGR, YIYA…TLEG, MYIT…TLLN, KLYV…VLDN, and RIYV…VLTL. Thr-463 carries the post-translational modification Phosphothreonine. At Tyr-466 the chain carries Phosphotyrosine. Residue Thr-475 is modified to Phosphothreonine. Residues 600 to 634 are disordered; sequence EPPRGTPDRSQADPDFASEVMSVSDWEEFDNSSED. Thr-605 bears the Phosphothreonine mark. The segment covering 624–634 has biased composition (acidic residues); the sequence is DWEEFDNSSED.

Component of the BCR(KLHL22) E3 ubiquitin ligase complex, at least composed of CUL3, KLHL22 and RBX1. Interacts with PLK1. Interacts with DEPDC5 (via DEP domain); the interaction depends on amino acid availability. Interacts with YWHAE; required for the nuclear localization of KLHL22 upon amino acid starvation.

It localises to the cytoplasm. Its subcellular location is the cytosol. The protein resides in the cytoskeleton. The protein localises to the microtubule organizing center. It is found in the centrosome. It localises to the spindle. Its subcellular location is the nucleus. The protein resides in the lysosome. It participates in protein modification; protein ubiquitination. Substrate-specific adapter of a BCR (BTB-CUL3-RBX1) E3 ubiquitin ligase complex required for chromosome alignment and localization of PLK1 at kinetochores. The BCR(KLHL22) ubiquitin ligase complex mediates monoubiquitination of PLK1, leading to PLK1 dissociation from phosphoreceptor proteins and subsequent removal from kinetochores, allowing silencing of the spindle assembly checkpoint (SAC) and chromosome segregation. Monoubiquitination of PLK1 does not lead to PLK1 degradation. The BCR(KLHL22) ubiquitin ligase complex is also responsible for the amino acid-stimulated 'Lys-48' polyubiquitination and proteasomal degradation of DEPDC5. Through the degradation of DEPDC5, releases the GATOR1 complex-mediated inhibition of the TORC1 pathway. It is therefore an amino acid-dependent activator within the amino acid-sensing branch of the TORC1 pathway, indirectly regulating different cellular processes including cell growth and autophagy. The chain is Kelch-like protein 22 from Homo sapiens (Human).